Consider the following 341-residue polypeptide: L-threonine 3-dehydrogenase (341 aa).

A Zn(2+)-binding site is contributed by cysteine 38. Catalysis depends on charge relay system residues threonine 40 and histidine 43. Positions 63, 64, 93, 96, 99, and 107 each coordinate Zn(2+). NAD(+)-binding positions include isoleucine 175, aspartate 195, arginine 200, 262 to 264, and 286 to 287; these read LGI and IY.

Belongs to the zinc-containing alcohol dehydrogenase family. In terms of assembly, homotetramer. It depends on Zn(2+) as a cofactor.

The protein localises to the cytoplasm. It carries out the reaction L-threonine + NAD(+) = (2S)-2-amino-3-oxobutanoate + NADH + H(+). The protein operates within amino-acid degradation; L-threonine degradation via oxydo-reductase pathway; glycine from L-threonine: step 1/2. Its function is as follows. Catalyzes the NAD(+)-dependent oxidation of L-threonine to 2-amino-3-ketobutyrate. This is L-threonine 3-dehydrogenase from Marinomonas sp. (strain MWYL1).